We begin with the raw amino-acid sequence, 124 residues long: Group 1 truncated hemoglobin GlbN (124 aa).

His-46, His-70, and His-117 together coordinate heme.

Belongs to the truncated hemoglobin family. Group I subfamily. As to quaternary structure, monomer. Requires heme as cofactor.

Functionally, forms a very stable complex with oxygen. The oxygen dissociation rate is 0.011 sec(-1). In Synechocystis sp. (strain ATCC 27184 / PCC 6803 / Kazusa), this protein is Group 1 truncated hemoglobin GlbN (glbN).